Consider the following 545-residue polypeptide: Pentatricopeptide repeat-containing protein At4g18840 (545 aa).

11 PPR repeats span residues 104–138 (NGFT…PVFP), 139–173 (DKYS…GLVT), 174–204 (DVFV…MPVR), 205–239 (DAVS…NVES), 240–266 (WNFM…MPVR), 267–301 (DVVS…STEK), 303–337 (DGFT…GIEI), 338–368 (EGFL…TSKR), 369–403 (DVST…GFKP), 404–434 (NGIT…MSSV), and 440–474 (TIEH…EASI). Positions 475-545 (LLESLLGACK…ERVNRSLDVA (71 aa)) are type E motif.

This sequence belongs to the PPR family. PCMP-E subfamily.

The chain is Pentatricopeptide repeat-containing protein At4g18840 (PCMP-E101) from Arabidopsis thaliana (Mouse-ear cress).